A 408-amino-acid polypeptide reads, in one-letter code: NADH-quinone oxidoreductase subunit D (408 aa).

It belongs to the complex I 49 kDa subunit family. In terms of assembly, NDH-1 is composed of 14 different subunits. Subunits NuoB, C, D, E, F, and G constitute the peripheral sector of the complex.

Its subcellular location is the cell inner membrane. It catalyses the reaction a quinone + NADH + 5 H(+)(in) = a quinol + NAD(+) + 4 H(+)(out). In terms of biological role, NDH-1 shuttles electrons from NADH, via FMN and iron-sulfur (Fe-S) centers, to quinones in the respiratory chain. The immediate electron acceptor for the enzyme in this species is believed to be ubiquinone. Couples the redox reaction to proton translocation (for every two electrons transferred, four hydrogen ions are translocated across the cytoplasmic membrane), and thus conserves the redox energy in a proton gradient. In Campylobacter jejuni subsp. jejuni serotype O:23/36 (strain 81-176), this protein is NADH-quinone oxidoreductase subunit D.